Consider the following 213-residue polypeptide: Isopentenyl-diphosphate Delta-isomerase (213 aa).

The span at 1 to 10 (MRDSMSEADR) shows a compositional bias: basic and acidic residues. A disordered region spans residues 1–34 (MRDSMSEADRSSPGSGKTDREDETAENATQDVIA). Residues histidine 51, histidine 58, and histidine 95 each coordinate Mn(2+). Residues 56–193 (VRHRAFTCLL…RQLRLCPWFE (138 aa)) form the Nudix hydrolase domain. Glutamate 113 contacts Mg(2+). Residues glutamate 142 and glutamate 144 each coordinate Mn(2+). The active site involves glutamate 144.

Belongs to the IPP isomerase type 1 family. Mg(2+) is required as a cofactor. It depends on Mn(2+) as a cofactor.

It localises to the cytoplasm. It carries out the reaction isopentenyl diphosphate = dimethylallyl diphosphate. It participates in isoprenoid biosynthesis; dimethylallyl diphosphate biosynthesis; dimethylallyl diphosphate from isopentenyl diphosphate: step 1/1. Functionally, catalyzes the 1,3-allylic rearrangement of the homoallylic substrate isopentenyl (IPP) to its highly electrophilic allylic isomer, dimethylallyl diphosphate (DMAPP). The sequence is that of Isopentenyl-diphosphate Delta-isomerase from Halobacterium salinarum (strain ATCC 700922 / JCM 11081 / NRC-1) (Halobacterium halobium).